The chain runs to 261 residues: Imidazole glycerol phosphate synthase subunit HisF (261 aa).

Catalysis depends on residues Asp-12 and Asp-131.

This sequence belongs to the HisA/HisF family. In terms of assembly, heterodimer of HisH and HisF.

It localises to the cytoplasm. The enzyme catalyses 5-[(5-phospho-1-deoxy-D-ribulos-1-ylimino)methylamino]-1-(5-phospho-beta-D-ribosyl)imidazole-4-carboxamide + L-glutamine = D-erythro-1-(imidazol-4-yl)glycerol 3-phosphate + 5-amino-1-(5-phospho-beta-D-ribosyl)imidazole-4-carboxamide + L-glutamate + H(+). Its pathway is amino-acid biosynthesis; L-histidine biosynthesis; L-histidine from 5-phospho-alpha-D-ribose 1-diphosphate: step 5/9. In terms of biological role, IGPS catalyzes the conversion of PRFAR and glutamine to IGP, AICAR and glutamate. The HisF subunit catalyzes the cyclization activity that produces IGP and AICAR from PRFAR using the ammonia provided by the HisH subunit. This chain is Imidazole glycerol phosphate synthase subunit HisF, found in Brucella melitensis biotype 2 (strain ATCC 23457).